The chain runs to 231 residues: Flagellar L-ring protein (231 aa).

The signal sequence occupies residues 1-18 (MKRFVSVVALSGVVSLAG). Cys-19 carries N-palmitoyl cysteine lipidation. Cys-19 is lipidated: S-diacylglycerol cysteine.

This sequence belongs to the FlgH family. As to quaternary structure, the basal body constitutes a major portion of the flagellar organelle and consists of four rings (L,P,S, and M) mounted on a central rod.

The protein localises to the cell outer membrane. It is found in the bacterial flagellum basal body. Functionally, assembles around the rod to form the L-ring and probably protects the motor/basal body from shearing forces during rotation. This Pseudomonas fluorescens (strain Pf0-1) protein is Flagellar L-ring protein.